The primary structure comprises 247 residues: MSRLVLAIGNSRWHWGIFSRDQAPQFWDAIAPHQPFSRSDLATFLQAQDPAIVADTPIAIASVVPQQLALLPEDWPQRRLQLRDVPLTNCYPQLGLDRAIALYEAGCQAGWPVLMIDCGTAITINAGDAEGQFAGGAILPGVTLQLRSLAQGTAALPSVEISAEGDRWGMDNQSAIASGVIYGIAGALRGFIEDWRSHHPQRPIYFTGGDGELLAKLLTDLPDIRVEPHLLLHGIDRLAQAMMTDPD.

ATP is bound at residue 7 to 14; that stretch reads AIGNSRWH. Substrate-binding positions include tyrosine 91 and 95 to 98; that span reads GLDR. Catalysis depends on aspartate 97, which acts as the Proton acceptor. Aspartate 117 lines the K(+) pocket. Threonine 120 is a binding site for ATP.

Belongs to the type III pantothenate kinase family. Homodimer. Requires NH4(+) as cofactor. It depends on K(+) as a cofactor.

Its subcellular location is the cytoplasm. It catalyses the reaction (R)-pantothenate + ATP = (R)-4'-phosphopantothenate + ADP + H(+). It participates in cofactor biosynthesis; coenzyme A biosynthesis; CoA from (R)-pantothenate: step 1/5. Functionally, catalyzes the phosphorylation of pantothenate (Pan), the first step in CoA biosynthesis. This Synechococcus sp. (strain ATCC 27144 / PCC 6301 / SAUG 1402/1) (Anacystis nidulans) protein is Type III pantothenate kinase.